The chain runs to 35 residues: Phosphoribulokinase (35 aa).

It belongs to the phosphoribulokinase family.

It is found in the plastid. It localises to the chloroplast. The catalysed reaction is D-ribulose 5-phosphate + ATP = D-ribulose 1,5-bisphosphate + ADP + H(+). It participates in carbohydrate biosynthesis; Calvin cycle. Its activity is regulated as follows. Light regulated via thioredoxin by reversible oxidation/reduction of sulfhydryl/disulfide groups. This chain is Phosphoribulokinase, found in Pinus pinaster (Maritime pine).